The chain runs to 162 residues: uncharacterized protein (162 aa).

The first 24 residues, 1–24 (MKRGVATLPVILVILLSVAAGAGA), serve as a signal peptide directing secretion.

This is an uncharacterized protein from Mycobacterium bovis (strain ATCC BAA-935 / AF2122/97).